The primary structure comprises 162 residues: UPF0763 protein Sdel_0383 (162 aa).

This sequence belongs to the UPF0763 family.

This Sulfurospirillum deleyianum (strain ATCC 51133 / DSM 6946 / 5175) protein is UPF0763 protein Sdel_0383.